Consider the following 142-residue polypeptide: Large ribosomal subunit protein uL13 (142 aa).

This sequence belongs to the universal ribosomal protein uL13 family. Part of the 50S ribosomal subunit.

Functionally, this protein is one of the early assembly proteins of the 50S ribosomal subunit, although it is not seen to bind rRNA by itself. It is important during the early stages of 50S assembly. The polypeptide is Large ribosomal subunit protein uL13 (Salmonella agona (strain SL483)).